The chain runs to 227 residues: NAD(P)H-quinone oxidoreductase subunit K, chloroplastic (227 aa).

The [4Fe-4S] cluster site is built by Cys43, Cys44, Cys108, and Cys139.

Belongs to the complex I 20 kDa subunit family. In terms of assembly, NDH is composed of at least 16 different subunits, 5 of which are encoded in the nucleus. Requires [4Fe-4S] cluster as cofactor.

The protein resides in the plastid. The protein localises to the chloroplast thylakoid membrane. It carries out the reaction a plastoquinone + NADH + (n+1) H(+)(in) = a plastoquinol + NAD(+) + n H(+)(out). The enzyme catalyses a plastoquinone + NADPH + (n+1) H(+)(in) = a plastoquinol + NADP(+) + n H(+)(out). Its function is as follows. NDH shuttles electrons from NAD(P)H:plastoquinone, via FMN and iron-sulfur (Fe-S) centers, to quinones in the photosynthetic chain and possibly in a chloroplast respiratory chain. The immediate electron acceptor for the enzyme in this species is believed to be plastoquinone. Couples the redox reaction to proton translocation, and thus conserves the redox energy in a proton gradient. The chain is NAD(P)H-quinone oxidoreductase subunit K, chloroplastic from Ranunculus macranthus (Large buttercup).